We begin with the raw amino-acid sequence, 128 residues long: Spore germination protein 1/2/3-related protein (128 aa).

An N-terminal signal peptide occupies residues 1 to 26; it reads MNIRNTLVLLVSTVLVLMSCSIGCYA. N-linked (GlcNAc...) asparagine glycans are attached at residues N55 and N119.

This sequence belongs to the Dictyostelium gerABC family.

It localises to the secreted. The polypeptide is Spore germination protein 1/2/3-related protein (Dictyostelium discoideum (Social amoeba)).